The primary structure comprises 800 residues: Phosphate transporter PHO1 homolog 9 (800 aa).

One can recognise an SPX domain in the interval 1 to 346; the sequence is MKFGREFETQ…SRNASKPYLN (346 aa). Residues 1 to 398 are Cytoplasmic-facing; it reads MKFGREFETQ…KTKREKHRIT (398 aa). Disordered stretches follow at residues 38–77, 91–119, and 212–234; these read QKQQ…PGLS, NRAS…HNHH, and PDLN…PAPS. The segment covering 42–51 has biased composition (pro residues); it reads RPPPPPPPPS. Positions 63–75 are enriched in gly residues; it reads GEGGGGGGGGGPG. Over residues 95-119 the composition is skewed to basic residues; sequence RSPKKSHKHHNPLSSKRHHHHHNHH. Positions 216–229 are enriched in polar residues; that stretch reads SVASAPSSPHSTMR. A helical membrane pass occupies residues 399–419; it reads YFLGFFSGCAVALAIAITVLV. The Extracellular portion of the chain corresponds to 420-439; that stretch reads HIRGLTKSEGRHQYMENIFP. A helical membrane pass occupies residues 440 to 460; the sequence is LYSLFGFVAVHLFMYAADIYF. At 461-483 the chain is on the cytoplasmic side; the sequence is WSRYRVNYPFIFGFEQGNDLGYR. A helical transmembrane segment spans residues 484-504; that stretch reads EVLLVGSGLAVLTFGGVISNL. Residues 505 to 520 are Extracellular-facing; the sequence is DMEMDPRTKSFSVITE. Residues 521-541 form a helical membrane-spanning segment; the sequence is LVPLALLVCLMMVLFCPFNII. At 542-670 the chain is on the cytoplasmic side; it reads YRSSRYFFVG…IFEMKRGTYW (129 aa). Positions 606 to 800 constitute an EXS domain; that stretch reads YDSEIYKELY…FQELGGSKSV (195 aa). The chain crosses the membrane as a helical span at residues 671 to 691; it reads LTVAVTTSSIATLFNTYWDIF. Residues 692 to 718 are Extracellular-facing; sequence RDWGLMNRNSKNPWLRDKLLVPYKSIY. Residues 719-739 traverse the membrane as a helical segment; sequence FIVMVANVVLRLAWMQTVLGI. Residues 740-800 are Cytoplasmic-facing; the sequence is KEAPFLHKRA…FQELGGSKSV (61 aa).

It belongs to the SYG1 (TC 2.A.94) family. In terms of tissue distribution, specifically expressed in pollen grains.

The protein localises to the cell membrane. Its function is as follows. May transport inorganic phosphate (Pi). This Arabidopsis thaliana (Mouse-ear cress) protein is Phosphate transporter PHO1 homolog 9 (PHO1-H9).